The chain runs to 84 residues: Esculentin-1Vb (84 aa).

Residues 1–22 (MFTLKKPLLLIVLLGIISLSLC) form the signal peptide. The propeptide occupies 23–36 (EQERNADEDEESET). An intrachain disulfide couples C78 to C84.

In terms of tissue distribution, expressed by the skin glands.

It localises to the secreted. Functionally, antimicrobial peptide. This Odorrana versabilis (Chinese bamboo leaf odorous frog) protein is Esculentin-1Vb.